We begin with the raw amino-acid sequence, 177 residues long: Large ribosomal subunit protein uL6 (177 aa).

This sequence belongs to the universal ribosomal protein uL6 family. Part of the 50S ribosomal subunit.

Functionally, this protein binds to the 23S rRNA, and is important in its secondary structure. It is located near the subunit interface in the base of the L7/L12 stalk, and near the tRNA binding site of the peptidyltransferase center. This Polynucleobacter asymbioticus (strain DSM 18221 / CIP 109841 / QLW-P1DMWA-1) (Polynucleobacter necessarius subsp. asymbioticus) protein is Large ribosomal subunit protein uL6.